Here is a 260-residue protein sequence, read N- to C-terminus: Glucosamine-6-phosphate deaminase (260 aa).

Residue Asp-67 is the Proton acceptor; for enolization step of the active site. The active-site For ring-opening step is Asp-136. Catalysis depends on His-138, which acts as the Proton acceptor; for ring-opening step. The For ring-opening step role is filled by Glu-143.

The protein belongs to the glucosamine/galactosamine-6-phosphate isomerase family. NagB subfamily.

The catalysed reaction is alpha-D-glucosamine 6-phosphate + H2O = beta-D-fructose 6-phosphate + NH4(+). The protein operates within amino-sugar metabolism; N-acetylneuraminate degradation; D-fructose 6-phosphate from N-acetylneuraminate: step 5/5. Functionally, catalyzes the reversible isomerization-deamination of glucosamine 6-phosphate (GlcN6P) to form fructose 6-phosphate (Fru6P) and ammonium ion. The sequence is that of Glucosamine-6-phosphate deaminase from Arthrobacter sp. (strain FB24).